The primary structure comprises 270 residues: uncharacterized protein (270 aa).

A divalent metal cation contacts are provided by Asp-53, His-55, Asp-83, Asn-116, His-207, and His-209.

The protein belongs to the metallophosphoesterase superfamily. A divalent metal cation is required as a cofactor.

This is an uncharacterized protein from Bacillus subtilis (strain 168).